Here is a 469-residue protein sequence, read N- to C-terminus: MEHHQPEHPAPGETRTAEAVSPENHKVLSEPKEHPQDKDAKEADGAAGEQEPVDQASLPAQGQDNFESPPPDASSSQPGPARETRPETETAGACSRLQELPQSPRARQPELDFYCVKWIPWKGEQTPIITQSANGPCPLIAIANILFLQWKVKLPPQKEVITSDELMAHLGDCLLSIKPQEKSEGLQLNFQQNVDDAMTVLPKLATGLDVNVRFTGVSDFEYTPECSVFDLLGIPLYHGWLVDPQSPEAVSAVGKLSYNQLVEKIITCKHSSDTNLVTEGLIAEQFLETTAAQLTYHGLCELTAAAKEGELSVFFRNNHFSTMTKHKGHLYLLVTDQGFLQEEQVVWESLHNVDGDSCFCDSDFHLSHSPGKGPGTGGGSGSPEKQRQVDQDYLIALSLQQQQPPPQGTSGLSDLELAQQLQQEEYQQHQAAQAAPARAPSPQGRGAASGRPAAERRQRPKQESDCVLL.

Residues 1 to 105 form a disordered region; sequence MEHHQPEHPA…RLQELPQSPR (105 aa). The segment covering 23–44 has biased composition (basic and acidic residues); sequence ENHKVLSEPKEHPQDKDAKEAD. Position 103 is a phosphoserine (S103). C137 serves as the catalytic Nucleophile. Residue H319 is the Proton acceptor of the active site. A ubiquitin-binding domain (UBD) region spans residues 388–428; sequence QVDQDYLIALSLQQQQPPPQGTSGLSDLELAQQLQQEEYQQ. Positions 401–469 are disordered; the sequence is QQQPPPQGTS…PKQESDCVLL (69 aa). Low complexity predominate over residues 415–448; it reads LELAQQLQQEEYQQHQAAQAAPARAPSPQGRGAA. S441 carries the phosphoserine modification. Positions 453–469 are enriched in basic and acidic residues; that stretch reads AAERRQRPKQESDCVLL.

The protein belongs to the MINDY deubiquitinase family. FAM63 subfamily.

The enzyme catalyses Thiol-dependent hydrolysis of ester, thioester, amide, peptide and isopeptide bonds formed by the C-terminal Gly of ubiquitin (a 76-residue protein attached to proteins as an intracellular targeting signal).. Functionally, hydrolase that can specifically remove 'Lys-48'-linked conjugated ubiquitin from proteins. Has exodeubiquitinase activity and has a preference for long polyubiquitin chains. May play a regulatory role at the level of protein turnover. This is Ubiquitin carboxyl-terminal hydrolase MINDY-1 (MINDY1) from Bos taurus (Bovine).